The chain runs to 190 residues: Large ribosomal subunit protein bL17 (190 aa).

Residues 135-165 (AKAAPAAEEAPAEEAPAAEEAATEEAPAAEE) show a composition bias toward low complexity. The segment at 135 to 190 (AKAAPAAEEAPAEEAPAAEEAATEEAPAAEETATEEAAAEEAPAAEEAPAEEKDAK) is disordered.

The protein belongs to the bacterial ribosomal protein bL17 family. As to quaternary structure, part of the 50S ribosomal subunit. Contacts protein L32.

This is Large ribosomal subunit protein bL17 from Pseudarthrobacter chlorophenolicus (strain ATCC 700700 / DSM 12829 / CIP 107037 / JCM 12360 / KCTC 9906 / NCIMB 13794 / A6) (Arthrobacter chlorophenolicus).